The following is a 305-amino-acid chain: GMP synthase [glutamine-hydrolyzing] subunit B (305 aa).

A GMPS ATP-PPase domain is found at 2 to 185 (VETEEFIAEA…LGLEEVISER (184 aa)). 29–35 (SGGVDSS) contributes to the ATP binding site.

As to quaternary structure, heterodimer composed of a glutamine amidotransferase subunit (A) and a GMP-binding subunit (B).

The catalysed reaction is XMP + L-glutamine + ATP + H2O = GMP + L-glutamate + AMP + diphosphate + 2 H(+). Its pathway is purine metabolism; GMP biosynthesis; GMP from XMP (L-Gln route): step 1/1. Functionally, catalyzes the synthesis of GMP from XMP. The polypeptide is GMP synthase [glutamine-hydrolyzing] subunit B (Halorubrum lacusprofundi (strain ATCC 49239 / DSM 5036 / JCM 8891 / ACAM 34)).